The following is a 361-amino-acid chain: MARSGLEPQTVTDATPLLGRSLPELQDWVVAQGQPSYRAKQLYQWLYERSIHNLAEISVFPKAWRQSLQAVPVGRSQIVDRSVSPSGTIKYLLRLHDGEIIEAVGIPSGDRLTVCVSSQLGCAMACDFCATGKGGFRRHLAPHEIIDQVLTVQEDWQQRVSNIVFMGMGEPLLNLDAVLAAIRCLNQDIGIGQRGITVSTVGIPGHIRRLAETKRVGDRPLQFTLAVSLHAPNQAIRDRLIPSSRHYPITDLLQECRDYVQITGRRVTFEYILLAGLNDQPEQAEQLAQLLRGFQSHVNLIPYNPIDEVEYQRPSKARVDAFADALRQQRVAVTVRWSKGLGADAACGQLRANRSTATLPA.

Catalysis depends on Glu-102, which acts as the Proton acceptor. The Radical SAM core domain maps to 108-344 (SGDRLTVCVS…VRWSKGLGAD (237 aa)). Cys-115 and Cys-347 form a disulfide bridge. Positions 122, 126, and 129 each coordinate [4Fe-4S] cluster. Residues 169–170 (GE), Ser-199, 228–230 (SLH), and Asn-304 contribute to the S-adenosyl-L-methionine site. The S-methylcysteine intermediate role is filled by Cys-347.

Belongs to the radical SAM superfamily. RlmN family. [4Fe-4S] cluster serves as cofactor.

It is found in the cytoplasm. It catalyses the reaction adenosine(2503) in 23S rRNA + 2 reduced [2Fe-2S]-[ferredoxin] + 2 S-adenosyl-L-methionine = 2-methyladenosine(2503) in 23S rRNA + 5'-deoxyadenosine + L-methionine + 2 oxidized [2Fe-2S]-[ferredoxin] + S-adenosyl-L-homocysteine. The catalysed reaction is adenosine(37) in tRNA + 2 reduced [2Fe-2S]-[ferredoxin] + 2 S-adenosyl-L-methionine = 2-methyladenosine(37) in tRNA + 5'-deoxyadenosine + L-methionine + 2 oxidized [2Fe-2S]-[ferredoxin] + S-adenosyl-L-homocysteine. Specifically methylates position 2 of adenine 2503 in 23S rRNA and position 2 of adenine 37 in tRNAs. This Synechococcus elongatus (strain ATCC 33912 / PCC 7942 / FACHB-805) (Anacystis nidulans R2) protein is Probable dual-specificity RNA methyltransferase RlmN.